The following is a 73-amino-acid chain: Translational regulator CsrA (73 aa).

It belongs to the CsrA/RsmA family. As to quaternary structure, homodimer; the beta-strands of each monomer intercalate to form a hydrophobic core, while the alpha-helices form wings that extend away from the core.

Its subcellular location is the cytoplasm. A translational regulator that binds mRNA to regulate translation initiation and/or mRNA stability. Usually binds in the 5'-UTR at or near the Shine-Dalgarno sequence preventing ribosome-binding, thus repressing translation. Its main target seems to be the major flagellin gene, while its function is anatagonized by FliW. The sequence is that of Translational regulator CsrA from Lachnospira eligens (strain ATCC 27750 / DSM 3376 / VPI C15-48 / C15-B4) (Eubacterium eligens).